The primary structure comprises 415 residues: Corticotropin-releasing factor receptor 1 (415 aa).

The N-terminal stretch at methionine 1–threonine 23 is a signal peptide. Residues serine 24–lysine 111 lie on the Extracellular side of the membrane. Disulfide bonds link cysteine 30/cysteine 54, cysteine 44/cysteine 87, and cysteine 68/cysteine 102. 5 N-linked (GlcNAc...) asparagine glycosylation sites follow: asparagine 38, asparagine 45, asparagine 78, asparagine 90, and asparagine 98. An important for peptide agonist binding region spans residues tyrosine 99 to glutamate 108. Residues serine 112–leucine 142 traverse the membrane as a helical segment. Residues arginine 143–cysteine 149 are Cytoplasmic-facing. The chain crosses the membrane as a helical span at residues leucine 150–leucine 174. Residues threonine 175–arginine 189 are Extracellular-facing. Cysteines 188 and 258 form a disulfide. A helical membrane pass occupies residues leucine 190–valine 218. The Cytoplasmic portion of the chain corresponds to leucine 219–arginine 225. A helical transmembrane segment spans residues leucine 226–tyrosine 253. Topologically, residues aspartate 254 to aspartate 269 are extracellular. A helical membrane pass occupies residues tyrosine 270–methionine 295. Positions leucine 280–isoleucine 290 are important for antagonist binding. Residues threonine 296–threonine 306 lie on the Cytoplasmic side of the membrane. A Phosphoserine; by PKA modification is found at serine 301. The helical transmembrane segment at isoleucine 307 to phenylalanine 331 threads the bilayer. Residues valine 332–glutamate 338 lie on the Extracellular side of the membrane. Residues valine 339–serine 368 form a helical membrane-spanning segment. The Cytoplasmic portion of the chain corresponds to glutamate 369–valine 415.

This sequence belongs to the G-protein coupled receptor 2 family. Interacts (via N-terminal extracellular domain) with CRH and UCN. Interacts with DLG1; this inhibits endocytosis of CRHR1 after agonist binding. Heterodimer; heterodimerizes with GPER1. C-terminal Ser or Thr residues may be phosphorylated. Post-translationally, phosphorylation at Ser-301 by PKA prevents maximal coupling to Gq-protein, and thereby negatively regulates downstream signaling. In terms of tissue distribution, detected in brain, especially in cerebellum. Detected in pituitary gland, and at lower levels in the olfactory bulb.

It localises to the cell membrane. Its subcellular location is the endosome. Functionally, G-protein coupled receptor for CRH (corticotropin-releasing factor) and UCN (urocortin). Has high affinity for CRH and UCN. Ligand binding causes a conformation change that triggers signaling via guanine nucleotide-binding proteins (G proteins) and down-stream effectors, such as adenylate cyclase. Promotes the activation of adenylate cyclase, leading to increased intracellular cAMP levels. Inhibits the activity of the calcium channel CACNA1H. Required for normal embryonic development of the adrenal gland and for normal hormonal responses to stress. Plays a role in the response to anxiogenic stimuli. The sequence is that of Corticotropin-releasing factor receptor 1 (Crhr1) from Rattus norvegicus (Rat).